A 433-amino-acid polypeptide reads, in one-letter code: 23S rRNA (uracil(1939)-C(5))-methyltransferase RlmD (433 aa).

Residues 10-68 form the TRAM domain; that stretch reads RTTTRQIITVSVNDLDSFGQGVARHNGKTLFIPGLLPQENAEVTVTEDKKQYARAKVVR. [4Fe-4S] cluster-binding residues include Cys81, Cys87, Cys90, and Cys162. Residues Gln265, Phe294, Asn299, Glu315, Asn342, and Asp363 each coordinate S-adenosyl-L-methionine. The Nucleophile role is filled by Cys389.

It belongs to the class I-like SAM-binding methyltransferase superfamily. RNA M5U methyltransferase family. RlmD subfamily.

The enzyme catalyses uridine(1939) in 23S rRNA + S-adenosyl-L-methionine = 5-methyluridine(1939) in 23S rRNA + S-adenosyl-L-homocysteine + H(+). In terms of biological role, catalyzes the formation of 5-methyl-uridine at position 1939 (m5U1939) in 23S rRNA. In Escherichia coli (strain UTI89 / UPEC), this protein is 23S rRNA (uracil(1939)-C(5))-methyltransferase RlmD.